The chain runs to 741 residues: Melanoma-associated antigen D4 (741 aa).

Residues 1–13 (MAEGSFSVQSESY) show a composition bias toward polar residues. Disordered regions lie at residues 1–27 (MAEG…EVGE), 136–206 (RVAT…EGPS), 247–296 (MAFP…KALA), and 323–379 (PEGA…QPSL). The segment covering 14-27 (SVEDMDEGSDEVGE) has biased composition (acidic residues). Polar residues-rich tracts occupy residues 140–151 (PQVSGEDTQPTT) and 187–196 (TSAQSQTGSP). Positions 354–363 (DEYESSEEER) are enriched in acidic residues. The region spanning 413 to 611 (LQERANKLVK…REWKAHFLEA (199 aa)) is the MAGE domain. Positions 700–720 (VSSGTNGGASTSVLDGPSTSS) are disordered. The segment covering 701–720 (SSGTNGGASTSVLDGPSTSS) has biased composition (polar residues).

Interacts with TRIM27. Expressed only in brain and ovary among normal tissues. Isoform 1 and isoform 2 are specifically expressed in glioma cells among cancer cells. Detected in some renal cell carcinoma samples.

In terms of biological role, may enhance ubiquitin ligase activity of RING-type zinc finger-containing E3 ubiquitin-protein ligases. Proposed to act through recruitment and/or stabilization of the Ubl-conjugating enzyme (E2) at the E3:substrate complex. The protein is Melanoma-associated antigen D4 (MAGED4) of Homo sapiens (Human).